The following is a 325-amino-acid chain: Putative gluconeogenesis factor (325 aa).

It belongs to the gluconeogenesis factor family.

It is found in the cytoplasm. Its function is as follows. Required for morphogenesis under gluconeogenic growth conditions. This Streptococcus pyogenes serotype M3 (strain ATCC BAA-595 / MGAS315) protein is Putative gluconeogenesis factor.